A 175-amino-acid polypeptide reads, in one-letter code: Protein SYM1 (175 aa).

3 consecutive transmembrane segments (helical) span residues M55–A75, V92–A112, and V143–I163.

The protein belongs to the peroxisomal membrane protein PXMP2/4 family.

It is found in the mitochondrion inner membrane. Its function is as follows. May be involved in cellular response to stress. Required to maintain mitochondrial DNA (mtDNA) integrity and stability. The protein is Protein SYM1 (SYM1) of Gibberella zeae (strain ATCC MYA-4620 / CBS 123657 / FGSC 9075 / NRRL 31084 / PH-1) (Wheat head blight fungus).